The sequence spans 314 residues: Vomeronasal type-1 receptor 98 (314 aa).

Residues 1 to 19 (MNKDTTMYCSAYIRDVFFC) are Extracellular-facing. The helical transmembrane segment at 20-40 (EIGVGISANSCLLLFHIFMFI) threads the bilayer. Residues 41-49 (RGHRPRLTD) are Cytoplasmic-facing. The chain crosses the membrane as a helical span at residues 50 to 70 (LPIGLMALIHLLMLLLAAYIA). At 71–92 (KDFFMSSGWDDITCKLFIFLHR) the chain is on the extracellular side. An intrachain disulfide couples C84 to C171. A helical transmembrane segment spans residues 93 to 113 (FFRSLSVCATCMLSVFQTIIL). Residues 114 to 133 (CPQSSHLAKFKPNSPYHLSC) lie on the Cytoplasmic side of the membrane. The helical transmembrane segment at 134-154 (FFIFMSIFYTSISSHILIAAI) threads the bilayer. Topologically, residues 155-186 (ATQNLTSVNLIYITKSCSFLPMSSSMQRTFST) are extracellular. N158 carries N-linked (GlcNAc...) asparagine glycosylation. Residues 187-207 (LLAFRNAFLIGLMGLSTCYMA) traverse the membrane as a helical segment. Residues 208-235 (TLLCRHKTRSQRLQNSKLSPKATPEQRA) are Cytoplasmic-facing. A helical transmembrane segment spans residues 236 to 256 (IWTLLMFMSFFLVMSTFDSII). Residues 257 to 268 (SYSRTIFQGNPS) lie on the Extracellular side of the membrane. A helical membrane pass occupies residues 269-289 (LYCAQILVAHSYAVVSPMLVL). The Cytoplasmic portion of the chain corresponds to 290-314 (SNENRLTNPLISMYERIVRLDFLCW).

It belongs to the G-protein coupled receptor 1 family.

The protein localises to the cell membrane. In terms of biological role, putative pheromone receptor implicated in the regulation of social as well as reproductive behavior. This chain is Vomeronasal type-1 receptor 98 (Vom1r98), found in Rattus norvegicus (Rat).